Here is a 315-residue protein sequence, read N- to C-terminus: Prephenate dehydratase (315 aa).

Positions 3-189 (RIAYLGPEGT…ARTRFLLIGV (187 aa)) constitute a Prephenate dehydratase domain. The region spanning 203 to 280 (SAVLRIANVP…ADVRYLGSWP (78 aa)) is the ACT domain.

As to quaternary structure, homodimer.

It carries out the reaction prephenate + H(+) = 3-phenylpyruvate + CO2 + H2O. It participates in amino-acid biosynthesis; L-phenylalanine biosynthesis; phenylpyruvate from prephenate: step 1/1. The sequence is that of Prephenate dehydratase (pheA) from Mycobacterium ulcerans (strain Agy99).